We begin with the raw amino-acid sequence, 2297 residues long: Serine/threonine-protein kinase WNK2 (2297 aa).

The span at 1–10 (MDGDGGRRDV) shows a compositional bias: basic and acidic residues. Disordered regions lie at residues 1-75 (MDGD…QRRV) and 89-183 (ARGR…EDDL). Omega-N-methylarginine is present on residues R19 and R30. Position 45 is a phosphoserine (S45). Residues 92–120 (RPAAPAPAALVAQPGAPGAPADAGPEPVG) are compositionally biased toward low complexity. Residues 142-172 (GPREEAAATVRKEDEGAAEAKPEPGRTRRDE) show a composition bias toward basic and acidic residues. The span at 173-182 (PEEEEDDEDD) shows a compositional bias: acidic residues. The 259-residue stretch at 195–453 (LKFDIELGRG…IKDLLSHAFF (259 aa)) folds into the Protein kinase domain. Residues S205, 275–278 (TELM), and K325 contribute to the ATP site. D342 acts as the Proton acceptor in catalysis. Residues S352 and S356 each carry the phosphoserine; by autocatalysis modification. Position 560 is a phosphoserine (S560). 8 disordered regions span residues 579 to 630 (AQAG…DSQS), 699 to 751 (FPDP…PVVP), 917 to 1022 (PQMA…PGSQ), 1117 to 1185 (PVQE…ERAS), 1262 to 1297 (SEDT…SQAN), 1323 to 1345 (APEA…ASQG), 1374 to 1480 (SAQS…HEAP), and 1492 to 1586 (PCTP…DSTI). Residues 604–625 (PTSATSLASDSTFDSGQGSTVY) are compositionally biased toward polar residues. Composition is skewed to pro residues over residues 709–740 (VLPP…PTPL) and 939–1007 (PPQP…PLQP). S1150 carries the phosphoserine modification. Residues 1167 to 1178 (ARKHHRRSTRAR) show a composition bias toward basic residues. At S1262 the chain carries Phosphoserine. The segment covering 1392–1406 (SKEQPSFLASQQLLS) has biased composition (polar residues). The span at 1411-1426 (SNPPGAPPAPLAPSSP) shows a compositional bias: pro residues. 2 stretches are compositionally biased toward polar residues: residues 1439–1453 (ATST…TASQ) and 1461–1473 (QGLT…SQPL). Residues 1510-1520 (EPLPPPAPEPS) show a composition bias toward pro residues. A compositionally biased stretch (low complexity) spans 1526-1544 (PQPALGQPAPLLPAAVGAV). A compositionally biased stretch (pro residues) spans 1552 to 1565 (PSPPLGPTVPPQPP). Residue S1588 is modified to Phosphoserine. Residues 1621 to 1631 (TLEPLRGDQPR) show a composition bias toward basic and acidic residues. The tract at residues 1621–1865 (TLEPLRGDQP…PVQKQASLPV (245 aa)) is disordered. The segment covering 1675–1688 (QGTSSSMTAESSPR) has biased composition (polar residues). The residue at position 1685 (S1685) is a Phosphoserine. Positions 1721–1731 (ARVEPTDRDGG) are enriched in basic and acidic residues. Residues S1736, S1817, S1818, S1862, and S1889 each carry the phosphoserine modification. Disordered stretches follow at residues 1970–1990 (NVGF…SKSK) and 2011–2031 (TGHL…QASV). The segment covering 1981 to 1990 (GRRRKTSKSK) has biased composition (basic residues). The residue at position 2067 (S2067) is a Phosphoserine. Disordered regions lie at residues 2123-2142 (SRSS…QPAL) and 2269-2297 (CCGH…PVRS). Residues 2272–2289 (HSTQPRGGQRVGSKTASF) are compositionally biased toward polar residues.

This sequence belongs to the protein kinase superfamily. Ser/Thr protein kinase family. WNK subfamily. In terms of assembly, forms a complex with the phosphorylated form of STK39. Requires Mg(2+) as cofactor. Post-translationally, autophosphorylated. Autophosphorylation at Ser-352 and Ser-356 promotes its activity. Expressed in various cancer cell lines (at protein level). Predominantly expressed in heart, brain, skeletal muscle and colon.

It localises to the cytoplasm. Its subcellular location is the cell membrane. The enzyme catalyses L-seryl-[protein] + ATP = O-phospho-L-seryl-[protein] + ADP + H(+). It catalyses the reaction L-threonyl-[protein] + ATP = O-phospho-L-threonyl-[protein] + ADP + H(+). Its activity is regulated as follows. Activation requires autophosphorylation of Ser-356 and, to a lower extent, Ser-352. Its function is as follows. Serine/threonine-protein kinase component of the WNK2-SPAK/OSR1 kinase cascade, which plays an important role in the regulation of electrolyte homeostasis, cell signaling, survival, and proliferation. The WNK2-SPAK/OSR1 kinase cascade is composed of WNK2, which mediates phosphorylation and activation of downstream kinases OXSR1/OSR1 and STK39/SPAK. Following activation, OXSR1/OSR1 and STK39/SPAK catalyze phosphorylation of ion cotransporters, regulating their activity. Acts as an activator and inhibitor of sodium-coupled chloride cotransporters and potassium-coupled chloride cotransporters respectively. Activates SLC12A2, SCNN1A, SCNN1B, SCNN1D and SGK1 and inhibits SLC12A5. Negatively regulates the EGF-induced activation of the ERK/MAPK-pathway and the downstream cell cycle progression. Affects MAPK3/MAPK1 activity by modulating the activity of MAP2K1 and this modulation depends on phosphorylation of MAP2K1 by PAK1. WNK2 acts by interfering with the activity of PAK1 by controlling the balance of the activity of upstream regulators of PAK1 activity, RHOA and RAC1, which display reciprocal activity. The sequence is that of Serine/threonine-protein kinase WNK2 from Homo sapiens (Human).